The primary structure comprises 316 residues: 4-hydroxy-3-methylbut-2-enyl diphosphate reductase (316 aa).

Cys12 serves as a coordination point for [4Fe-4S] cluster. (2E)-4-hydroxy-3-methylbut-2-enyl diphosphate contacts are provided by His41 and His74. Dimethylallyl diphosphate contacts are provided by His41 and His74. The isopentenyl diphosphate site is built by His41 and His74. Cys96 is a [4Fe-4S] cluster binding site. His124 serves as a coordination point for (2E)-4-hydroxy-3-methylbut-2-enyl diphosphate. Residue His124 participates in dimethylallyl diphosphate binding. Isopentenyl diphosphate is bound at residue His124. The active-site Proton donor is Glu126. Thr169 contacts (2E)-4-hydroxy-3-methylbut-2-enyl diphosphate. Residue Cys199 coordinates [4Fe-4S] cluster. 4 residues coordinate (2E)-4-hydroxy-3-methylbut-2-enyl diphosphate: Ser227, Ser228, Asn229, and Ser271. 4 residues coordinate dimethylallyl diphosphate: Ser227, Ser228, Asn229, and Ser271. Isopentenyl diphosphate is bound by residues Ser227, Ser228, Asn229, and Ser271.

It belongs to the IspH family. [4Fe-4S] cluster is required as a cofactor.

The enzyme catalyses isopentenyl diphosphate + 2 oxidized [2Fe-2S]-[ferredoxin] + H2O = (2E)-4-hydroxy-3-methylbut-2-enyl diphosphate + 2 reduced [2Fe-2S]-[ferredoxin] + 2 H(+). The catalysed reaction is dimethylallyl diphosphate + 2 oxidized [2Fe-2S]-[ferredoxin] + H2O = (2E)-4-hydroxy-3-methylbut-2-enyl diphosphate + 2 reduced [2Fe-2S]-[ferredoxin] + 2 H(+). The protein operates within isoprenoid biosynthesis; dimethylallyl diphosphate biosynthesis; dimethylallyl diphosphate from (2E)-4-hydroxy-3-methylbutenyl diphosphate: step 1/1. Its pathway is isoprenoid biosynthesis; isopentenyl diphosphate biosynthesis via DXP pathway; isopentenyl diphosphate from 1-deoxy-D-xylulose 5-phosphate: step 6/6. Catalyzes the conversion of 1-hydroxy-2-methyl-2-(E)-butenyl 4-diphosphate (HMBPP) into a mixture of isopentenyl diphosphate (IPP) and dimethylallyl diphosphate (DMAPP). Acts in the terminal step of the DOXP/MEP pathway for isoprenoid precursor biosynthesis. The chain is 4-hydroxy-3-methylbut-2-enyl diphosphate reductase from Vibrio vulnificus (strain CMCP6).